The chain runs to 360 residues: uncharacterized protein (360 aa).

Solcar repeat units follow at residues 34 to 153 (VGVL…LSVW), 172 to 256 (PDWS…FKTN), and 266 to 355 (NPFV…FKFL). 6 helical membrane passes run 40–60 (VSAS…LDVV), 125–145 (LWSG…FYFT), 178–198 (AVAG…IEMI), 225–247 (ISSF…GIYW), 269–289 (VVSF…THPF), and 327–348 (FSSG…MISF).

The protein belongs to the mitochondrial carrier (TC 2.A.29) family.

The protein localises to the mitochondrion inner membrane. This is an uncharacterized protein from Caenorhabditis elegans.